Consider the following 847-residue polypeptide: Putative disease resistance RPP13-like protein 3 (847 aa).

A coiled-coil region spans residues 24–41 (LMGVKDDLEELKTELTCI). One can recognise an NB-ARC domain in the interval 143 to 453 (TNVRVRQLRR…AEGFIQEDEE (311 aa)). Residue 192–199 (GMGGLGKT) coordinates ATP.

This sequence belongs to the disease resistance NB-LRR family. RPP13 subfamily.

Functionally, potential disease resistance protein. This is Putative disease resistance RPP13-like protein 3 (RPP13L3) from Arabidopsis thaliana (Mouse-ear cress).